The primary structure comprises 3351 residues: Apolipophorins (3351 aa).

The N-terminal stretch at 1 to 25 is a signal peptide; that stretch reads MARMKYNIALIGILASVLLTIAVNA. The Vitellogenin domain maps to 43 to 641; the sequence is YIPGNYYDYS…SQHGFLPRSS (599 aa). N-linked (GlcNAc...) asparagine glycans are attached at residues asparagine 67, asparagine 644, asparagine 1514, asparagine 1744, asparagine 1932, asparagine 1979, and asparagine 2822. The VWFD domain occupies 2786–2952; sequence LRGHVVDGKH…DYGVGKCTAI (167 aa).

As to quaternary structure, interacts with Nrx-1 (via cytoplasmic domain); the interaction supports apolpp/ApoLI protein stability. In terms of processing, may be modified covalently by lipidation. Post-translationally, cleaved into 2 chains by furin protease. However, prevention of cleavage does not impair its function. During stage 12, it is highly present throughout the yolk sac. By late stage 14, it localizes in the lateral fat body cells. Starting at stage 14, it localizes to the apodemes. Component of hemolymph clots (at protein level). Expressed in the amniosera. Expressed in rhabdomere of photoreceptor cells in retina (at protein level). In terms of tissue distribution, expressed in rhabdomere of photoreceptor cells in retina (at protein level). As to expression, expressed in simper cells as well as interphotoreceptor matrix (at protein level).

The protein resides in the secreted. Its subcellular location is the cell projection. It localises to the rhabdomere. In terms of biological role, constitutes the major component of lipophorin, which mediates transport for various types of lipids in hemolymph. Acts by forming lipoprotein particles that bind lipoproteins and lipids. Also involved in the transport of hydrophobic ligands like juvenile hormones, pheromone hydrocarbons and carotenoids. Required for morphogens wingless (wg) and hedgehog (hh) function, probably by acting as vehicles for the movement of wg and hh, explaining how covalently lipidated wg and hh can spread over long distances. May also be involved in transport and/or metabolism of heme. Involved in yolk granule formation. May be a component of yolk incorporated into yolk granules via yl/yolkless-mediated endocytosis and the endolysosomal pathway. The sequence is that of Apolipophorins from Drosophila melanogaster (Fruit fly).